Here is a 225-residue protein sequence, read N- to C-terminus: UPF0173 metal-dependent hydrolase Pars_0810 (225 aa).

Belongs to the UPF0173 family.

This Pyrobaculum arsenaticum (strain DSM 13514 / JCM 11321 / PZ6) protein is UPF0173 metal-dependent hydrolase Pars_0810.